The chain runs to 329 residues: Methionyl-tRNA formyltransferase (329 aa).

112–115 lines the (6S)-5,6,7,8-tetrahydrofolate pocket; it reads SILP.

The protein belongs to the Fmt family.

It catalyses the reaction L-methionyl-tRNA(fMet) + (6R)-10-formyltetrahydrofolate = N-formyl-L-methionyl-tRNA(fMet) + (6S)-5,6,7,8-tetrahydrofolate + H(+). In terms of biological role, attaches a formyl group to the free amino group of methionyl-tRNA(fMet). The formyl group appears to play a dual role in the initiator identity of N-formylmethionyl-tRNA by promoting its recognition by IF2 and preventing the misappropriation of this tRNA by the elongation apparatus. This is Methionyl-tRNA formyltransferase from Shewanella sediminis (strain HAW-EB3).